Consider the following 63-residue polypeptide: Cytochrome c oxidase subunit 7C, mitochondrial (63 aa).

The N-terminal 16 residues, 1–16, are a transit peptide targeting the mitochondrion; that stretch reads MLGHSIRRFTTSVVRR. At 17 to 33 the chain is on the mitochondrial matrix side; it reads SHYEEGPGKNLPFSVEN. An N6-acetyllysine; alternate modification is found at K25. The residue at position 25 (K25) is an N6-succinyllysine; alternate. The chain crosses the membrane as a helical span at residues 34–60; that stretch reads KWTLLVKMCLFFGSAFSVPFLIVRHQL. Topologically, residues 61–63 are mitochondrial intermembrane; it reads LKQ.

This sequence belongs to the cytochrome c oxidase VIIc family. In terms of assembly, component of the cytochrome c oxidase (complex IV, CIV), a multisubunit enzyme composed of 14 subunits. The complex is composed of a catalytic core of 3 subunits MT-CO1, MT-CO2 and MT-CO3, encoded in the mitochondrial DNA, and 11 supernumerary subunits COX4I, COX5A, COX5B, COX6A, COX6B, COX6C, COX7A, COX7B, COX7C, COX8 and NDUFA4, which are encoded in the nuclear genome. The complex exists as a monomer or a dimer and forms supercomplexes (SCs) in the inner mitochondrial membrane with NADH-ubiquinone oxidoreductase (complex I, CI) and ubiquinol-cytochrome c oxidoreductase (cytochrome b-c1 complex, complex III, CIII), resulting in different assemblies (supercomplex SCI(1)III(2)IV(1) and megacomplex MCI(2)III(2)IV(2)). Interacts with RAB5IF.

The protein resides in the mitochondrion inner membrane. Its pathway is energy metabolism; oxidative phosphorylation. Functionally, component of the cytochrome c oxidase, the last enzyme in the mitochondrial electron transport chain which drives oxidative phosphorylation. The respiratory chain contains 3 multisubunit complexes succinate dehydrogenase (complex II, CII), ubiquinol-cytochrome c oxidoreductase (cytochrome b-c1 complex, complex III, CIII) and cytochrome c oxidase (complex IV, CIV), that cooperate to transfer electrons derived from NADH and succinate to molecular oxygen, creating an electrochemical gradient over the inner membrane that drives transmembrane transport and the ATP synthase. Cytochrome c oxidase is the component of the respiratory chain that catalyzes the reduction of oxygen to water. Electrons originating from reduced cytochrome c in the intermembrane space (IMS) are transferred via the dinuclear copper A center (CU(A)) of subunit 2 and heme A of subunit 1 to the active site in subunit 1, a binuclear center (BNC) formed by heme A3 and copper B (CU(B)). The BNC reduces molecular oxygen to 2 water molecules using 4 electrons from cytochrome c in the IMS and 4 protons from the mitochondrial matrix. This chain is Cytochrome c oxidase subunit 7C, mitochondrial (COX7C), found in Macaca fascicularis (Crab-eating macaque).